Reading from the N-terminus, the 284-residue chain is Tropomyosin-1 (284 aa).

The stretch at 1-284 (MDGIKKKMIA…DQTFAELTGY (284 aa)) forms a coiled coil. Positions 111–131 (TKLEEASKTAEESERGRKDLE) are disordered.

Belongs to the tropomyosin family. In terms of assembly, homodimer.

Its function is as follows. Tropomyosin, in association with the troponin complex, plays a central role in the calcium dependent regulation of muscle contraction. The chain is Tropomyosin-1 from Schistosoma mansoni (Blood fluke).